A 606-amino-acid chain; its full sequence is Medium-chain acyl-CoA ligase ACSF2, mitochondrial (606 aa).

Residues 1-13 constitute a mitochondrion transit peptide; sequence MSSKILLTNLRTS. Residues 256-264, aspartate 484, arginine 499, and lysine 590 each bind ATP; that span reads TSGTTGKPK.

It belongs to the ATP-dependent AMP-binding enzyme family.

The protein resides in the mitochondrion. It carries out the reaction a medium-chain fatty acid + ATP + CoA = a medium-chain fatty acyl-CoA + AMP + diphosphate. The catalysed reaction is octanoate + ATP + CoA = octanoyl-CoA + AMP + diphosphate. Acyl-CoA synthases catalyze the initial reaction in fatty acid metabolism, by forming a thioester with CoA. Has some preference toward medium-chain substrates. Plays a role in adipocyte differentiation. In Danio rerio (Zebrafish), this protein is Medium-chain acyl-CoA ligase ACSF2, mitochondrial.